An 866-amino-acid chain; its full sequence is Paramyosin (866 aa).

Residues 1 to 22 (MMNHDTESHVKISRTIYRGVSP) form a nonhelical region region. The stretch at 23 to 839 (STTRLESRVR…AERTVTVRRV (817 aa)) forms a coiled coil. The tract at residues 840–866 (GPGGRAVSVARELSVTSNRGMRATSMM) is nonhelical region.

This sequence belongs to the paramyosin family. As to quaternary structure, homodimer.

The protein localises to the cytoplasm. It localises to the myofibril. Its function is as follows. Paramyosin is a major structural component of many thick filaments isolated from invertebrate muscles. The protein is Paramyosin of Schistosoma japonicum (Blood fluke).